We begin with the raw amino-acid sequence, 169 residues long: Ribosome maturation factor RimM (169 aa).

The region spanning 92–166 (NKEYYWNDIF…IVIDLTNLNN (75 aa)) is the PRC barrel domain.

The protein belongs to the RimM family. Binds ribosomal protein uS19.

It localises to the cytoplasm. In terms of biological role, an accessory protein needed during the final step in the assembly of 30S ribosomal subunit, possibly for assembly of the head region. Essential for efficient processing of 16S rRNA. May be needed both before and after RbfA during the maturation of 16S rRNA. It has affinity for free ribosomal 30S subunits but not for 70S ribosomes. The polypeptide is Ribosome maturation factor RimM (Buchnera aphidicola subsp. Cinara cedri (strain Cc)).